The following is a 323-amino-acid chain: Phosphatidylethanolamine:ceramide ethanolaminephosphotransferase (323 aa).

Residues 1–26 (MAVPPVEMYSGSFWNRMRKPLPLRTQ) are Cytoplasmic-facing. Residues 27 to 47 (VIRFTVVFVIVSFILAVALQI) form a helical membrane-spanning segment. Residues 48-73 (THERMPDPKVTKPLPDLGFEVLHKYP) lie on the Extracellular side of the membrane. Residues 74-94 (FLFSVADCCIGFLNILSVFTA) form a helical membrane-spanning segment. The Cytoplasmic segment spans residues 95-147 (FKLYLLHRHCVGSGEPELPCNIPGVSRFFLSVWLCKENCRIELRNVHTIAWIR). The chain crosses the membrane as a helical span at residues 148 to 168 (FITSYALLLLSRSVIMVVTSL). The Extracellular portion of the chain corresponds to 169–211 (PNPDDLCQDPPKIENRVKDVILTVLTAGAGSIHCGDLMYSGHT). Histidine 210 is a catalytic residue. The helical transmembrane segment at 212-232 (VILTLHLMFHWIYGAMVHWSF) threads the bilayer. A topological domain (cytoplasmic) is located at residue arginine 233. A helical transmembrane segment spans residues 234-254 (PVVTVVAIFGYYCIVASRFHY). Active-site residues include histidine 253 and aspartate 257. The Extracellular portion of the chain corresponds to 255–257 (TDD). Residues 258–278 (VLVAIYLTIATFIAVGHNADG) form a helical membrane-spanning segment. Residues 279–323 (APWQLQLFIRWLPCCGANSREVTEDGVPVAIVIKNEEMMNFEGKS) lie on the Cytoplasmic side of the membrane.

The protein belongs to the sphingomyelin synthase family.

Its subcellular location is the membrane. Functionally, bidirectional lipid ethanolaminephosphotransferase capable of converting phosphatidylethanolamine (PE) and ceramide to ethanolamine-phosphorylceramide (EPC) and diacylglycerol (DAG) and vice versa. Direction is dependent on the relative concentrations of DAG and ceramide as phosphoethanolamine acceptors. Does not function strictly as a SM synthase. Essential for viability of the pathogenic bloodstream stage of this human protozoan parasite and, consequently, can be considered as potential drug target. This chain is Phosphatidylethanolamine:ceramide ethanolaminephosphotransferase, found in Trypanosoma brucei brucei (strain 927/4 GUTat10.1).